The primary structure comprises 142 residues: Transcriptional regulator MraZ (142 aa).

2 consecutive SpoVT-AbrB domains span residues 5-47 (EYNH…PLGE) and 76-119 (ANEV…SKEK).

It belongs to the MraZ family. Forms oligomers.

It is found in the cytoplasm. Its subcellular location is the nucleoid. This chain is Transcriptional regulator MraZ, found in Clostridium acetobutylicum (strain ATCC 824 / DSM 792 / JCM 1419 / IAM 19013 / LMG 5710 / NBRC 13948 / NRRL B-527 / VKM B-1787 / 2291 / W).